The chain runs to 354 residues: Uroporphyrinogen decarboxylase (354 aa).

Residues 27–31 (RQAGR), Asp77, Tyr153, Thr208, and His326 each bind substrate.

It belongs to the uroporphyrinogen decarboxylase family. As to quaternary structure, homodimer.

The protein resides in the cytoplasm. The enzyme catalyses uroporphyrinogen III + 4 H(+) = coproporphyrinogen III + 4 CO2. Its pathway is porphyrin-containing compound metabolism; protoporphyrin-IX biosynthesis; coproporphyrinogen-III from 5-aminolevulinate: step 4/4. Catalyzes the decarboxylation of four acetate groups of uroporphyrinogen-III to yield coproporphyrinogen-III. In Neisseria meningitidis serogroup C (strain 053442), this protein is Uroporphyrinogen decarboxylase.